Here is a 384-residue protein sequence, read N- to C-terminus: Succinyl-diaminopimelate desuccinylase (384 aa).

Position 69 (H69) interacts with Zn(2+). The active site involves D71. A Zn(2+)-binding site is contributed by D103. The active-site Proton acceptor is the E137. Residues E138, E166, and H355 each coordinate Zn(2+).

The protein belongs to the peptidase M20A family. DapE subfamily. As to quaternary structure, homodimer. It depends on Zn(2+) as a cofactor. The cofactor is Co(2+).

The enzyme catalyses N-succinyl-(2S,6S)-2,6-diaminopimelate + H2O = (2S,6S)-2,6-diaminopimelate + succinate. Its pathway is amino-acid biosynthesis; L-lysine biosynthesis via DAP pathway; LL-2,6-diaminopimelate from (S)-tetrahydrodipicolinate (succinylase route): step 3/3. In terms of biological role, catalyzes the hydrolysis of N-succinyl-L,L-diaminopimelic acid (SDAP), forming succinate and LL-2,6-diaminopimelate (DAP), an intermediate involved in the bacterial biosynthesis of lysine and meso-diaminopimelic acid, an essential component of bacterial cell walls. This Rickettsia canadensis (strain McKiel) protein is Succinyl-diaminopimelate desuccinylase.